Reading from the N-terminus, the 198-residue chain is Putative pseudouridine methyltransferase (198 aa).

2 residues coordinate S-adenosyl-L-methionine: L132 and C186.

This sequence belongs to the methyltransferase superfamily. TrmY family.

The protein resides in the cytoplasm. The chain is Putative pseudouridine methyltransferase from Shewanella frigidimarina (strain NCIMB 400).